Reading from the N-terminus, the 467-residue chain is Ribulose bisphosphate carboxylase large chain (467 aa).

Lys-5 carries the post-translational modification N6,N6,N6-trimethyllysine. Residues Asn-114 and Thr-164 each coordinate substrate. Catalysis depends on Lys-166, which acts as the Proton acceptor. Lys-168 lines the substrate pocket. Positions 192, 194, and 195 each coordinate Mg(2+). Position 192 is an N6-carboxylysine (Lys-192). His-285 serves as the catalytic Proton acceptor. Arg-286, His-318, and Ser-370 together coordinate substrate.

Belongs to the RuBisCO large chain family. Type I subfamily. In terms of assembly, heterohexadecamer of 8 large chains and 8 small chains; disulfide-linked. The disulfide link is formed within the large subunit homodimers. Requires Mg(2+) as cofactor. The disulfide bond which can form in the large chain dimeric partners within the hexadecamer appears to be associated with oxidative stress and protein turnover.

Its subcellular location is the plastid. The protein resides in the chloroplast. The enzyme catalyses 2 (2R)-3-phosphoglycerate + 2 H(+) = D-ribulose 1,5-bisphosphate + CO2 + H2O. The catalysed reaction is D-ribulose 1,5-bisphosphate + O2 = 2-phosphoglycolate + (2R)-3-phosphoglycerate + 2 H(+). Functionally, ruBisCO catalyzes two reactions: the carboxylation of D-ribulose 1,5-bisphosphate, the primary event in carbon dioxide fixation, as well as the oxidative fragmentation of the pentose substrate in the photorespiration process. Both reactions occur simultaneously and in competition at the same active site. The polypeptide is Ribulose bisphosphate carboxylase large chain (Jasminum simplicifolium subsp. suavissimum (Native jasmine)).